A 69-amino-acid polypeptide reads, in one-letter code: A-kinase anchor protein inhibitor 1 (69 aa).

The disordered stretch occupies residues 39–69 (QESLRREGRPGDSRAWGQLGGCELTKKHEKK). The segment covering 41–50 (SLRREGRPGD) has biased composition (basic and acidic residues).

As to quaternary structure, binds cAMP-dependent protein kinase (PKA). Interacts specifically with RII-regulatory subunits of PKA (PRKAR2A and PRKAR2B). Preferentially expressed in the neural tissues.

In terms of biological role, protein kinase A (PKA)-binding protein. Binds to type II regulatory subunits of protein kinase A (PKA) and may block the A-kinase anchoring protein (AKAP)-mediated subcellular localization of PKA. This chain is A-kinase anchor protein inhibitor 1, found in Mus musculus (Mouse).